A 108-amino-acid chain; its full sequence is Translation initiation factor 1A (108 aa).

Residues 11–85 (PSRDVPKPEE…NRCDILYKYG (75 aa)) enclose the S1-like domain.

The protein belongs to the eIF-1A family.

In terms of biological role, seems to be required for maximal rate of protein biosynthesis. Enhances ribosome dissociation into subunits and stabilizes the binding of the initiator Met-tRNA(I) to 40 S ribosomal subunits. This Saccharolobus islandicus (strain Y.N.15.51 / Yellowstone #2) (Sulfolobus islandicus) protein is Translation initiation factor 1A (eIF1A).